Reading from the N-terminus, the 445-residue chain is Exodeoxyribonuclease 7 large subunit (445 aa).

It belongs to the XseA family. As to quaternary structure, heterooligomer composed of large and small subunits.

Its subcellular location is the cytoplasm. The enzyme catalyses Exonucleolytic cleavage in either 5'- to 3'- or 3'- to 5'-direction to yield nucleoside 5'-phosphates.. Bidirectionally degrades single-stranded DNA into large acid-insoluble oligonucleotides, which are then degraded further into small acid-soluble oligonucleotides. The sequence is that of Exodeoxyribonuclease 7 large subunit from Staphylococcus aureus (strain JH1).